The sequence spans 147 residues: MPVTVRVRRVGHRGPPLDLPRYESAGAAGLDLRADEPFTLAPGERRVVPTGLALELPPGHEGQVRPRSGLAARHGVGMVNAPGTIDADYRGEVGVILVNHGQAPVAFARGDRIAQLVIAPVVRAELELVDALSDSDRGAGGFGSTGQ.

Residues 67–69 (RSG), Asn80, and 84–86 (TID) contribute to the substrate site.

Belongs to the dUTPase family. The cofactor is Mg(2+).

The catalysed reaction is dUTP + H2O = dUMP + diphosphate + H(+). It participates in pyrimidine metabolism; dUMP biosynthesis; dUMP from dCTP (dUTP route): step 2/2. This enzyme is involved in nucleotide metabolism: it produces dUMP, the immediate precursor of thymidine nucleotides and it decreases the intracellular concentration of dUTP so that uracil cannot be incorporated into DNA. This is Deoxyuridine 5'-triphosphate nucleotidohydrolase from Anaeromyxobacter dehalogenans (strain 2CP-1 / ATCC BAA-258).